A 370-amino-acid polypeptide reads, in one-letter code: Ganglioside-induced differentiation-associated protein 1-like 1 (370 aa).

Positions 45–129 (ESLVLYHWTQ…YVERTFTGEH (85 aa)) constitute a GST N-terminal domain. The 168-residue stretch at 177–344 (PKYATAEIRR…RLVKRKPPSF (168 aa)) folds into the GST C-terminal domain.

The protein belongs to the GST superfamily.

The chain is Ganglioside-induced differentiation-associated protein 1-like 1 (Gdap1l1) from Mus musculus (Mouse).